We begin with the raw amino-acid sequence, 333 residues long: UPF0285 protein MTH_1441 (333 aa).

This sequence belongs to the UPF0285 family.

The sequence is that of UPF0285 protein MTH_1441 from Methanothermobacter thermautotrophicus (strain ATCC 29096 / DSM 1053 / JCM 10044 / NBRC 100330 / Delta H) (Methanobacterium thermoautotrophicum).